The chain runs to 152 residues: 3-hydroxyacyl-[acyl-carrier-protein] dehydratase FabZ (152 aa).

Residue His-58 is part of the active site.

Belongs to the thioester dehydratase family. FabZ subfamily.

It is found in the cytoplasm. It carries out the reaction a (3R)-hydroxyacyl-[ACP] = a (2E)-enoyl-[ACP] + H2O. In terms of biological role, involved in unsaturated fatty acids biosynthesis. Catalyzes the dehydration of short chain beta-hydroxyacyl-ACPs and long chain saturated and unsaturated beta-hydroxyacyl-ACPs. The sequence is that of 3-hydroxyacyl-[acyl-carrier-protein] dehydratase FabZ from Prochlorococcus marinus subsp. pastoris (strain CCMP1986 / NIES-2087 / MED4).